The sequence spans 334 residues: Petrobactin import system permease protein FatD (334 aa).

9 consecutive transmembrane segments (helical) span residues 24 to 44, 64 to 84, 98 to 118, 119 to 139, 152 to 172, 197 to 217, 234 to 254, 277 to 297, and 304 to 324; these read FIIA…TGVY, TVAL…MQLI, IEWS…PTLV, QRMT…FLFL, IIGL…GLLF, LWLI…LTLA, IVLF…AVIG, SNLP…DIIS, and FELP…ITIL.

The protein belongs to the binding-protein-dependent transport system permease family. FecCD subfamily. In terms of assembly, the complex is composed of two ATP-binding proteins (FatE), two transmembrane proteins (FatC and FatD) and a solute-binding protein (FpuA).

Its subcellular location is the cell membrane. Functionally, part of an ABC transporter complex involved in ferric-petrobactin uptake. Probably responsible for the translocation of the substrate across the membrane. In Bacillus anthracis, this protein is Petrobactin import system permease protein FatD.